A 184-amino-acid chain; its full sequence is Photosystem I assembly protein Ycf4 (184 aa).

Helical transmembrane passes span 20 to 42 (VNLCWACILVCGATGFLLVGFSS) and 57 to 79 (IAFIPQGLVMCFYGIAGLFLGLY).

The protein belongs to the Ycf4 family.

It localises to the plastid. It is found in the chloroplast thylakoid membrane. In terms of biological role, seems to be required for the assembly of the photosystem I complex. In Adiantum capillus-veneris (Maidenhair fern), this protein is Photosystem I assembly protein Ycf4.